We begin with the raw amino-acid sequence, 128 residues long: Ribonuclease P protein component 4 (128 aa).

The Zn(2+) site is built by cysteine 67, cysteine 70, cysteine 96, and cysteine 99.

This sequence belongs to the eukaryotic/archaeal RNase P protein component 4 family. As to quaternary structure, consists of a catalytic RNA component and at least 4-5 protein subunits. Zn(2+) is required as a cofactor.

It localises to the cytoplasm. The catalysed reaction is Endonucleolytic cleavage of RNA, removing 5'-extranucleotides from tRNA precursor.. Functionally, part of ribonuclease P, a protein complex that generates mature tRNA molecules by cleaving their 5'-ends. The protein is Ribonuclease P protein component 4 of Methanopyrus kandleri (strain AV19 / DSM 6324 / JCM 9639 / NBRC 100938).